The following is a 127-amino-acid chain: Aspartate 1-decarboxylase (127 aa).

Residue Ser-25 is the Schiff-base intermediate with substrate; via pyruvic acid of the active site. Residue Ser-25 is modified to Pyruvic acid (Ser). Thr-57 is a substrate binding site. Residue Tyr-58 is the Proton donor of the active site. 73–75 (GAA) is a binding site for substrate.

Belongs to the PanD family. In terms of assembly, heterooctamer of four alpha and four beta subunits. The cofactor is pyruvate. Post-translationally, is synthesized initially as an inactive proenzyme, which is activated by self-cleavage at a specific serine bond to produce a beta-subunit with a hydroxyl group at its C-terminus and an alpha-subunit with a pyruvoyl group at its N-terminus.

Its subcellular location is the cytoplasm. The enzyme catalyses L-aspartate + H(+) = beta-alanine + CO2. Its pathway is cofactor biosynthesis; (R)-pantothenate biosynthesis; beta-alanine from L-aspartate: step 1/1. In terms of biological role, catalyzes the pyruvoyl-dependent decarboxylation of aspartate to produce beta-alanine. The sequence is that of Aspartate 1-decarboxylase from Staphylococcus aureus (strain bovine RF122 / ET3-1).